Reading from the N-terminus, the 146-residue chain is D-aminoacyl-tRNA deacylase (146 aa).

The Gly-cisPro motif, important for rejection of L-amino acids motif lies at 137–138 (GP).

This sequence belongs to the DTD family. In terms of assembly, homodimer.

Its subcellular location is the cytoplasm. It carries out the reaction glycyl-tRNA(Ala) + H2O = tRNA(Ala) + glycine + H(+). The catalysed reaction is a D-aminoacyl-tRNA + H2O = a tRNA + a D-alpha-amino acid + H(+). Its function is as follows. An aminoacyl-tRNA editing enzyme that deacylates mischarged D-aminoacyl-tRNAs. Also deacylates mischarged glycyl-tRNA(Ala), protecting cells against glycine mischarging by AlaRS. Acts via tRNA-based rather than protein-based catalysis; rejects L-amino acids rather than detecting D-amino acids in the active site. By recycling D-aminoacyl-tRNA to D-amino acids and free tRNA molecules, this enzyme counteracts the toxicity associated with the formation of D-aminoacyl-tRNA entities in vivo and helps enforce protein L-homochirality. This chain is D-aminoacyl-tRNA deacylase, found in Halalkalibacterium halodurans (strain ATCC BAA-125 / DSM 18197 / FERM 7344 / JCM 9153 / C-125) (Bacillus halodurans).